A 609-amino-acid polypeptide reads, in one-letter code: Probable G-protein coupled receptor 153 (609 aa).

Residues 1–11 (MSDERRLPGSA) lie on the Extracellular side of the membrane. Residues 12-32 (VGWLVCGGLSLLANAWGILSV) form a helical membrane-spanning segment. Residues 33–41 (GAKQKKWKP) are Cytoplasmic-facing. The helical transmembrane segment at 42–62 (LEFLLCTLAATHMLNVAVPIA) threads the bilayer. The Extracellular portion of the chain corresponds to 63–84 (TYSVVQLRRQRPDFEWNEGLCK). Residues 85–105 (VFVSTFYTLTLATCFSVTSLS) traverse the membrane as a helical segment. Over 106-126 (YHRMWMVCWPVNYRLSNAKKQ) the chain is Cytoplasmic. The helical transmembrane segment at 127-147 (AVHTVMGIWMVSFILSALPAV) threads the bilayer. At 148–175 (GWHDTSERFYTHGCRFIVAEIGLGFGVC) the chain is on the extracellular side. The chain crosses the membrane as a helical span at residues 176–196 (FLLLVGGSVAMGVICTAIALF). Over 197–243 (QTLAVQVGRQADRRAFTVPTIVVEDAQGKRRSSIDGSEPAKTSLQTT) the chain is Cytoplasmic. The helical transmembrane segment at 244-264 (GLVTTIVFIYDCLMGFPVLVV) threads the bilayer. Residues 265–276 (SFSSLRADASAP) are Extracellular-facing. The helical transmembrane segment at 277 to 297 (WMALCVLWCSVAQALLLPVFL) threads the bilayer. Residues 298-609 (WACDRYRADL…LHSDSLGSAS (312 aa)) lie on the Cytoplasmic side of the membrane. Disordered stretches follow at residues 446–496 (DAPP…SASA) and 514–609 (ALRR…GSAS). Composition is skewed to low complexity over residues 458–479 (ESLLSLRPSALDSGPRGARDSP) and 527–536 (AAPDGADPGE). Gly residues predominate over residues 571 to 583 (EPGGLRAAGGGGS). A compositionally biased stretch (low complexity) spans 584-596 (TSSFLSSPSESSG).

It belongs to the G-protein coupled receptor 1 family.

Its subcellular location is the cell membrane. In terms of biological role, orphan receptor. In Homo sapiens (Human), this protein is Probable G-protein coupled receptor 153 (GPR153).